The following is a 311-amino-acid chain: MALPILLDCDPGHDDAIAIVLALASPELDVKAITSSAGNQTPEKTLRNVLRMLTLLNRTDIPVAGGAVKPLMRELIIADNVHGESGLDGPALPEPTFAPQNCTAVELMAKTLRESAEPVTIVSTGPQTNVALLLNSHPELHSKIARIVIMGGAMGLGNWTPAAEFNIYVDPEAAEIVFQSGIPVVMAGLDVTHKAQIHIEDTERFRAIGNPVSTIVAELLDFFLEYHKDEKWGFVGAPLHDPCTIAWLLKPELFTTVERWVGVETQGKYTQGMTVVDYYYLTDNKPNATVMVDVDRQGFVDLLADRLKFYA.

H240 is an active-site residue.

Belongs to the IUNH family. RihA subfamily.

Functionally, hydrolyzes cytidine or uridine to ribose and cytosine or uracil, respectively. This Shigella boydii serotype 4 (strain Sb227) protein is Pyrimidine-specific ribonucleoside hydrolase RihA.